Reading from the N-terminus, the 136-residue chain is Peptide methionine sulfoxide reductase B5 (136 aa).

Residues 14 to 135 form the MsrB domain; the sequence is DEEWRAVLSP…NSVSIKFTPA (122 aa). Residues Cys53, Cys56, Cys99, and Cys102 each coordinate Zn(2+). Cys71 and Cys124 are oxidised to a cystine. Cys124 functions as the Nucleophile in the catalytic mechanism.

It belongs to the MsrB Met sulfoxide reductase family. It depends on Zn(2+) as a cofactor.

It is found in the cytoplasm. It localises to the cytosol. The enzyme catalyses L-methionyl-[protein] + [thioredoxin]-disulfide + H2O = L-methionyl-(R)-S-oxide-[protein] + [thioredoxin]-dithiol. Catalyzes the reduction of methionine sulfoxide (MetSO) to methionine in proteins. Plays a protective role against oxidative stress by restoring activity to proteins that have been inactivated by methionine oxidation. MSRB family specifically reduces the MetSO R-enantiomer. The chain is Peptide methionine sulfoxide reductase B5 (MSRB5) from Oryza sativa subsp. japonica (Rice).